A 226-amino-acid polypeptide reads, in one-letter code: MKLRPHLKIEAKGTGSVSFFSEDWLTAQQARTFARELGRFPYMKELEFEDEKGGSWTLKELEKLTEELAQEPDDITVYFDGSFDKESELAGLGIVIYYSLGGTRHRLRKNKSFRLKTNNEAEYAALYEAIREVRELGASRNSITIKGDSLVVLNQLDGSWPCYDPSHNEWLDKIEALLESLKLTPTYETIQRKDNQEADGLAKKILSHQFVESHTKLDRNGDDDIG.

One can recognise an RNase H type-1 domain in the interval 71–207 (EPDDITVYFD…ADGLAKKILS (137 aa)).

This is an uncharacterized protein from Bacillus subtilis (strain 168).